A 141-amino-acid polypeptide reads, in one-letter code: Large ribosomal subunit protein uL11 (141 aa).

It belongs to the universal ribosomal protein uL11 family. Part of the ribosomal stalk of the 50S ribosomal subunit. Interacts with L10 and the large rRNA to form the base of the stalk. L10 forms an elongated spine to which L12 dimers bind in a sequential fashion forming a multimeric L10(L12)X complex. In terms of processing, one or more lysine residues are methylated.

Functionally, forms part of the ribosomal stalk which helps the ribosome interact with GTP-bound translation factors. The chain is Large ribosomal subunit protein uL11 from Prochlorococcus marinus (strain SARG / CCMP1375 / SS120).